An 86-amino-acid polypeptide reads, in one-letter code: UPF0297 protein CA_C1679 (86 aa).

Belongs to the UPF0297 family.

This Clostridium acetobutylicum (strain ATCC 824 / DSM 792 / JCM 1419 / IAM 19013 / LMG 5710 / NBRC 13948 / NRRL B-527 / VKM B-1787 / 2291 / W) protein is UPF0297 protein CA_C1679.